The sequence spans 396 residues: Ribosomal RNA large subunit methyltransferase I (396 aa).

The PUA domain maps to 2 to 81 (SVRLVLAKGR…ETIDIAFFTR (80 aa)).

It belongs to the methyltransferase superfamily. RlmI family.

The protein resides in the cytoplasm. The catalysed reaction is cytidine(1962) in 23S rRNA + S-adenosyl-L-methionine = 5-methylcytidine(1962) in 23S rRNA + S-adenosyl-L-homocysteine + H(+). Its function is as follows. Specifically methylates the cytosine at position 1962 (m5C1962) of 23S rRNA. This chain is Ribosomal RNA large subunit methyltransferase I, found in Cronobacter sakazakii (strain ATCC BAA-894) (Enterobacter sakazakii).